Consider the following 862-residue polypeptide: MFGILNRGHKIKGTVVLMTKNVFDFNEFVSTTRGGIVGAAGGLFGAATDIVGGIVDGATAIFSRNIAIQLISATKTDGLGNGKVGKQTFLEKHLPSLPNLGDRQDAFNVYFEWDENFGIPEAFYIKNFMQSEFFLVSLTLEDIPNHGTIHFVCNSWVYNAKSYKRDRIFFANKTYLPNETPASLVKYRKEELENLRGDGTGERKEYDRIYDYAVYNDLGNPDKNKNLARTTLGGSSDFPYPRRGRTGRKSTRKDPKCEIPTSDTYIPRDENFGHLKSGDFLTYAIKSLTQNVLPTFQKAFGFNNEFDTFEDVRGLFEGGLYLPTDVISKISPIPVLKEILRTDGEQVLKFPPPHVIRVTKSAWMTDEEFGREMLAGVNPCLIQRLQEFPPKSKLDVTVYGDQTSTMTKEHLEINLGGLTVEEALHGNRLFILDHHDAFIPYLERINDLPTAKCYATRTILFLKDDNTLKPLAIELSLPNPGGKGANSRVILPADGGAESTIWLLAKAYVVVNDSCYHQLMSHWLNTHAVMEPFVIATNRHLSVLHPIYKLLLPHYRDTMNINALARQSLINAGGVIERSFLPGEFAVEMSSAVYKSWVFTDQALPADLIKRGMAVEDPSSPYGLRLVVEDYPYAVDGLEIWDTIQTWVKDYVSLYYPTNDAVKKDTELQAWWKEAVEKGHGDLKDKPWWPKLNTPQDLIHTCSIIIWIASALHAAVNFGQYPYGGFILNRPTITRRLLPEPGTKEYGELTSNYQKAYLRTITGKVEAIVDLSVIEILSRHASDEVYLGQRDNPNWTNNIKALQAFKRFGQKLKEIEEKIMGRNKDSSLRNRNGPVKMPYTVLLPTCEDEGLTFRGIPNSISI.

One can recognise a PLAT domain in the interval 44–171; sequence FGAATDIVGG…SYKRDRIFFA (128 aa). One can recognise a Lipoxygenase domain in the interval 174 to 862; sequence TYLPNETPAS…FRGIPNSISI (689 aa). The tract at residues 225 to 257 is disordered; the sequence is KNLARTTLGGSSDFPYPRRGRTGRKSTRKDPKC. Basic residues predominate over residues 242–251; the sequence is RRGRTGRKST. Positions 522, 527, 713, 717, and 862 each coordinate Fe cation.

This sequence belongs to the lipoxygenase family. As to quaternary structure, monomer. Requires Fe cation as cofactor.

It is found in the cytoplasm. It carries out the reaction (9Z,12Z)-octadecadienoate + O2 = (13S)-hydroperoxy-(9Z,11E)-octadecadienoate. It catalyses the reaction (9Z,12Z,15Z)-octadecatrienoate + O2 = (13S)-hydroperoxy-(9Z,11E,15Z)-octadecatrienoate. The catalysed reaction is (9Z,12Z)-octadecadienoate + O2 = (9S)-hydroperoxy-(10E,12Z)-octadecadienoate. It functions in the pathway lipid metabolism; oxylipin biosynthesis. Its function is as follows. Plant lipoxygenase may be involved in a number of diverse aspects of plant physiology including growth and development, pest resistance, and senescence or responses to wounding. It catalyzes the hydroperoxidation of lipids containing a cis,cis-1,4-pentadiene structure. The chain is Linoleate 9S-lipoxygenase 1 (LOXA) from Phaseolus vulgaris (Kidney bean).